Here is a 120-residue protein sequence, read N- to C-terminus: NAD(P)H-quinone oxidoreductase subunit 3, chloroplastic (120 aa).

The next 3 helical transmembrane spans lie at 9-29, 64-84, and 88-108; these read IFWAFLIISSAIPVLAFLISG, MFALVFVVFDVETVFLYPWAM, and VLGVSAFLEAFIFVLILILGL.

It belongs to the complex I subunit 3 family. NDH is composed of at least 16 different subunits, 5 of which are encoded in the nucleus.

The protein resides in the plastid. The protein localises to the chloroplast thylakoid membrane. It catalyses the reaction a plastoquinone + NADH + (n+1) H(+)(in) = a plastoquinol + NAD(+) + n H(+)(out). It carries out the reaction a plastoquinone + NADPH + (n+1) H(+)(in) = a plastoquinol + NADP(+) + n H(+)(out). Functionally, NDH shuttles electrons from NAD(P)H:plastoquinone, via FMN and iron-sulfur (Fe-S) centers, to quinones in the photosynthetic chain and possibly in a chloroplast respiratory chain. The immediate electron acceptor for the enzyme in this species is believed to be plastoquinone. Couples the redox reaction to proton translocation, and thus conserves the redox energy in a proton gradient. This chain is NAD(P)H-quinone oxidoreductase subunit 3, chloroplastic, found in Draba nemorosa (Woodland whitlowgrass).